Consider the following 563-residue polypeptide: Methylcrotonoyl-CoA carboxylase beta chain, mitochondrial (563 aa).

The N-terminal 22 residues, 1 to 22, are a transit peptide targeting the mitochondrion; it reads MWGALRSALRPCCRAAVPPQRA. The 258-residue stretch at 49–306 folds into the CoA carboxyltransferase N-terminal domain; it reads MKALVSQLHE…QKKMDVTIEP (258 aa). Positions 49–555 are carboxyltransferase; sequence MKALVSQLHE…SAALNAPIQR (507 aa). Lys-70 carries the N6-acetyllysine; alternate modification. Lys-70 bears the N6-succinyllysine; alternate mark. At Lys-141 the chain carries N6-succinyllysine. The CoA carboxyltransferase C-terminal domain occupies 309 to 555; the sequence is EPLFPADELY…SAALNAPIQR (247 aa). An acyl-CoA binding region spans residues 343-372; that stretch reads RFNEFKALYGDTLVTGFARIFGYPVGIIGN. The residue at position 433 (Lys-433) is an N6-succinyllysine. The residue at position 495 (Lys-495) is an N6-acetyllysine; alternate. Lys-495 is modified (N6-succinyllysine; alternate). The residue at position 511 (Lys-511) is an N6-acetyllysine.

Belongs to the AccD/PCCB family. As to quaternary structure, probably a dodecamer composed of six biotin-containing alpha subunits (MCCC1) and six beta (MCCC2) subunits.

Its subcellular location is the mitochondrion matrix. It catalyses the reaction 3-methylbut-2-enoyl-CoA + hydrogencarbonate + ATP = 3-methyl-(2E)-glutaconyl-CoA + ADP + phosphate + H(+). It functions in the pathway amino-acid degradation; L-leucine degradation; (S)-3-hydroxy-3-methylglutaryl-CoA from 3-isovaleryl-CoA: step 2/3. Its function is as follows. Carboxyltransferase subunit of the 3-methylcrotonyl-CoA carboxylase, an enzyme that catalyzes the conversion of 3-methylcrotonyl-CoA to 3-methylglutaconyl-CoA, a critical step for leucine and isovaleric acid catabolism. This Mus musculus (Mouse) protein is Methylcrotonoyl-CoA carboxylase beta chain, mitochondrial (Mccc2).